We begin with the raw amino-acid sequence, 254 residues long: 3-deoxy-manno-octulosonate cytidylyltransferase (254 aa).

The protein belongs to the KdsB family.

The protein localises to the cytoplasm. The enzyme catalyses 3-deoxy-alpha-D-manno-oct-2-ulosonate + CTP = CMP-3-deoxy-beta-D-manno-octulosonate + diphosphate. It functions in the pathway nucleotide-sugar biosynthesis; CMP-3-deoxy-D-manno-octulosonate biosynthesis; CMP-3-deoxy-D-manno-octulosonate from 3-deoxy-D-manno-octulosonate and CTP: step 1/1. Its pathway is bacterial outer membrane biogenesis; lipopolysaccharide biosynthesis. Its function is as follows. Activates KDO (a required 8-carbon sugar) for incorporation into bacterial lipopolysaccharide in Gram-negative bacteria. This chain is 3-deoxy-manno-octulosonate cytidylyltransferase, found in Pseudomonas fluorescens (strain SBW25).